Consider the following 207-residue polypeptide: Small ribosomal subunit protein uS10m (207 aa).

Residues 1–14 constitute a mitochondrion transit peptide; the sequence is MNMFRQAVRSFVRY.

The protein belongs to the universal ribosomal protein uS10 family. As to quaternary structure, part of the mitochondrial small ribosomal subunit.

The protein resides in the mitochondrion. Its function is as follows. Involved in mitochondrial genome encoded proteins translation. Involved in the binding of tRNA to the ribosomes. This is Small ribosomal subunit protein uS10m (RSM10) from Kluyveromyces lactis (strain ATCC 8585 / CBS 2359 / DSM 70799 / NBRC 1267 / NRRL Y-1140 / WM37) (Yeast).